Reading from the N-terminus, the 110-residue chain is Cysteine-rich and transmembrane domain-containing protein 1 (110 aa).

Positions 1–18 (MNYENPPPYASPPAPYPP) are enriched in pro residues. The disordered stretch occupies residues 1–45 (MNYENPPPYASPPAPYPPYGQQQPSYPVPNQYPGNPPGPVGYQPA). The segment covering 19–29 (YGQQQPSYPVP) has biased composition (low complexity). A helical membrane pass occupies residues 87 to 104 (SGESACLTACWTALCCCC).

It belongs to the CYSTM1 family.

Its subcellular location is the membrane. This chain is Cysteine-rich and transmembrane domain-containing protein 1 (cystm1), found in Xenopus tropicalis (Western clawed frog).